The primary structure comprises 511 residues: RNA-splicing ligase RtcB homolog (511 aa).

Mn(2+) is bound by residues aspartate 125, cysteine 128, histidine 233, histidine 265, and histidine 359. 232–236 serves as a coordination point for GMP; the sequence is NHYAE. Residues 359–360, 408–411, serine 415, 434–437, and lysine 510 contribute to the GMP site; these read HN, GGTM, and HGAG. The active-site GMP-histidine intermediate is histidine 434.

It belongs to the RtcB family. In terms of assembly, catalytic component of the tRNA-splicing ligase complex. Mn(2+) is required as a cofactor.

The catalysed reaction is a 3'-end 3'-phospho-ribonucleotide-RNA + a 5'-end dephospho-ribonucleoside-RNA + GTP = a ribonucleotidyl-ribonucleotide-RNA + GMP + diphosphate. The enzyme catalyses a 3'-end 2',3'-cyclophospho-ribonucleotide-RNA + a 5'-end dephospho-ribonucleoside-RNA + GTP + H2O = a ribonucleotidyl-ribonucleotide-RNA + GMP + diphosphate + H(+). Catalytic subunit of the tRNA-splicing ligase complex that acts by directly joining spliced tRNA halves to mature-sized tRNAs by incorporating the precursor-derived splice junction phosphate into the mature tRNA as a canonical 3',5'-phosphodiester. May act as an RNA ligase with broad substrate specificity, and may function toward other RNAs. The polypeptide is RNA-splicing ligase RtcB homolog (Plasmodium knowlesi (strain H)).